A 239-amino-acid polypeptide reads, in one-letter code: Homeobox-leucine zipper protein HOX12 (239 aa).

The tract at residues 22–65 is disordered; it reads PEAATSGGEQKKARQRRRRKVKPEAAAALAGESGGDEQAKKRRL. A DNA-binding region (homeobox) is located at residues 58–117; the sequence is EQAKKRRLSDEQARFLEMSFKKERKLETPRKVQLAAELGLDAKQVAVWFQNRRARHKSKL. Residues 107–168 are a coiled coil; that stretch reads QNRRARHKSK…KLAAVAAATT (62 aa).

This sequence belongs to the HD-ZIP homeobox family. Class I subfamily. As to expression, expressed in seedlings, roots, stems, leaf sheaths and panicles.

The protein resides in the nucleus. Its function is as follows. Probable transcription factor. The protein is Homeobox-leucine zipper protein HOX12 (HOX12) of Oryza sativa subsp. indica (Rice).